An 845-amino-acid chain; its full sequence is MRLENREGRPTSGVLEMELPQASAPSRAGLGSLGLVGLDSSNHRPQQGGSKAGSRGPYLSGAAGQSCWVPMDQDFGPFLTERRSHCPFPKHFSSRSKDPCFTENTPLLGSFSQEEGSRCIPVYRPEFITADEPWENSSAEWEGGALLSTELAVSSGSASTEKGELLDSAHIRCHLSKLRCCVQWLKVSGLFVFVVLCSILFSLYPDQGKFWQLLAVSPLESYSVNLSSHADSMLLQVDLAGALVASGPSHLGKEEHVAVEVTQANAPGSRRRRPQQVTHNWTIFLNPSGGEHTVMSRTFEVLSREPVSINIRASLQQTQIVPLLMAHQYLRASIEAQVTIAAVILAGVYVLIIFEIVHRTLAAMLGSLAALAALAVIGDRPTLTQVVEWIDFETLALLFGMMILVAIFSETGFFDYCAVKAYQLSRGRVWAMIIMLCLIAAVLSAFLDNVTTALLFTPVTIRLCEVLNLDPRQVLIAEVIFTNIGGAATAIGDPPNVIIVSNQELRKMGLDFAGFTAHMFAGICFVLLFSFPLLRLLYWNRKLYNKEPSEIVELKHEIHVWRLTAQRISPASREETAVRGLLLEKVLSLERLLARRLHSFHRQISQEDKNWETNIQELQKKHRISDRTLLTKCVTVLGLVIFMFFLNSFVPGVHLDLGWIAILGAIWLLILADIHDFEIILHRVEWATLLFFAALFILMEALAHLHLIEYVGEQTALLIKMVPEDQRLAAAIIVVVWVSAIASSLIDNIPFTATMIPVLLNLSRDPEISLPAPPLMYALALGACLGGNGTLIGASANVVCAGIAEQHGYGFSFMEFFRLGFPMMVVSCMVGMCYLLVAHVVMGWN.

The disordered stretch occupies residues 1–57 (MRLENREGRPTSGVLEMELPQASAPSRAGLGSLGLVGLDSSNHRPQQGGSKAGSRGP). Residues 1-183 (MRLENREGRP…HLSKLRCCVQ (183 aa)) are Extracellular-facing. Positions 26–40 (SRAGLGSLGLVGLDS) are enriched in low complexity. The helical transmembrane segment at 184–204 (WLKVSGLFVFVVLCSILFSLY) threads the bilayer. At 205–337 (PDQGKFWQLL…QYLRASIEAQ (133 aa)) the chain is on the cytoplasmic side. A helical transmembrane segment spans residues 338–358 (VTIAAVILAGVYVLIIFEIVH). Residues 359–360 (RT) are Extracellular-facing. A helical transmembrane segment spans residues 361–381 (LAAMLGSLAALAALAVIGDRP). At 382–393 (TLTQVVEWIDFE) the chain is on the cytoplasmic side. The helical transmembrane segment at 394-414 (TLALLFGMMILVAIFSETGFF) threads the bilayer. Topologically, residues 415–429 (DYCAVKAYQLSRGRV) are extracellular. A helical membrane pass occupies residues 430-450 (WAMIIMLCLIAAVLSAFLDNV). Over 451-513 (TTALLFTPVT…ELRKMGLDFA (63 aa)) the chain is Cytoplasmic. Residues 514 to 534 (GFTAHMFAGICFVLLFSFPLL) traverse the membrane as a helical segment. Over 535–629 (RLLYWNRKLY…KKHRISDRTL (95 aa)) the chain is Extracellular. The chain crosses the membrane as a helical span at residues 630 to 650 (LTKCVTVLGLVIFMFFLNSFV). A topological domain (cytoplasmic) is located at residue Pro651. The chain crosses the membrane as a helical span at residues 652–672 (GVHLDLGWIAILGAIWLLILA). Topologically, residues 673–687 (DIHDFEIILHRVEWA) are extracellular. A helical transmembrane segment spans residues 688–708 (TLLFFAALFILMEALAHLHLI). Residues 709–730 (EYVGEQTALLIKMVPEDQRLAA) are Cytoplasmic-facing. A helical transmembrane segment spans residues 731–751 (AIIVVVWVSAIASSLIDNIPF). The Extracellular segment spans residues 752-773 (TATMIPVLLNLSRDPEISLPAP). The chain crosses the membrane as a helical span at residues 774–794 (PLMYALALGACLGGNGTLIGA). Residues 795-820 (SANVVCAGIAEQHGYGFSFMEFFRLG) lie on the Cytoplasmic side of the membrane. Residues 821–841 (FPMMVVSCMVGMCYLLVAHVV) traverse the membrane as a helical segment. Residues 842–845 (MGWN) are Extracellular-facing.

This sequence belongs to the CitM (TC 2.A.11) transporter family.

It localises to the melanosome membrane. The enzyme catalyses chloride(in) = chloride(out). Functionally, contributes to a melanosome-specific anion (chloride) current that modulates melanosomal pH for optimal tyrosinase activity required for melanogenesis and the melanosome maturation. One of the components of the mammalian pigmentary system. May serve as a key control point at which ethnic skin color variation is determined. Major determinant of brown and/or blue eye color. Seems to regulate the post-translational processing of tyrosinase, which catalyzes the limiting reaction in melanin synthesis. The polypeptide is P protein (Oca2) (Sus scrofa (Pig)).